We begin with the raw amino-acid sequence, 464 residues long: Flavin-containing monooxygenase FMO GS-OX-like 7 (464 aa).

Position 18-23 (18-23) interacts with FAD; that stretch reads GAGAAG. NADP(+) is bound at residue 214-219; sequence GSSVSG.

It belongs to the FMO family. FAD is required as a cofactor.

Catalyzes the conversion of methylthioalkyl glucosinolates of any chain length into methylsulfinylalkyl glucosinolates. The chain is Flavin-containing monooxygenase FMO GS-OX-like 7 from Arabidopsis thaliana (Mouse-ear cress).